The primary structure comprises 438 residues: Dol-P-Man:Man(5)GlcNAc(2)-PP-Dol alpha-1,3-mannosyltransferase (438 aa).

A Phosphoserine modification is found at serine 13. 11 consecutive transmembrane segments (helical) span residues 41 to 61, 95 to 115, 123 to 143, 149 to 169, 172 to 192, 203 to 223, 231 to 251, 289 to 309, 332 to 352, 356 to 376, and 407 to 427; these read YTLL…FWVI, TGPL…FYAT, MAQN…FLIY, VPPF…SIFV, LFND…FLAQ, LAVS…FLLL, ALPK…PFLL, FHLA…LCRW, ALTP…GICF, LHYQ…WAMP, and AALH…PESF.

This sequence belongs to the glycosyltransferase ALG3 family.

It is found in the endoplasmic reticulum membrane. It carries out the reaction an alpha-D-Man-(1-&gt;2)-alpha-D-Man-(1-&gt;2)-alpha-D-Man-(1-&gt;3)-[alpha-D-Man-(1-&gt;6)]-beta-D-Man-(1-&gt;4)-beta-D-GlcNAc-(1-&gt;4)-alpha-D-GlcNAc-diphospho-di-trans,poly-cis-dolichol + a di-trans,poly-cis-dolichyl beta-D-mannosyl phosphate = an alpha-D-Man-(1-&gt;2)-alpha-D-Man-(1-&gt;2)-alpha-D-Man-(1-&gt;3)-[alpha-D-Man-(1-&gt;3)-alpha-D-Man-(1-&gt;6)]-beta-D-Man-(1-&gt;4)-beta-D-GlcNAc-(1-&gt;4)-alpha-D-GlcNAc-diphospho-di-trans,poly-cis-dolichol + a di-trans,poly-cis-dolichyl phosphate + H(+). Its pathway is protein modification; protein glycosylation. Its function is as follows. Dol-P-Man:Man(5)GlcNAc(2)-PP-Dol alpha-1,3-mannosyltransferase that operates in the biosynthetic pathway of dolichol-linked oligosaccharides, the glycan precursors employed in protein asparagine (N)-glycosylation. The assembly of dolichol-linked oligosaccharides begins on the cytosolic side of the endoplasmic reticulum membrane and finishes in its lumen. The sequential addition of sugars to dolichol pyrophosphate produces dolichol-linked oligosaccharides containing fourteen sugars, including two GlcNAcs, nine mannoses and three glucoses. Once assembled, the oligosaccharide is transferred from the lipid to nascent proteins by oligosaccharyltransferases. In the lumen of the endoplasmic reticulum, adds the first dolichyl beta-D-mannosyl phosphate derived mannose in an alpha-1,3 linkage to Man(5)GlcNAc(2)-PP-dolichol to produce Man(6)GlcNAc(2)-PP-dolichol. Man(6)GlcNAc(2)-PP-dolichol is a substrate for ALG9, the following enzyme in the biosynthetic pathway. In Mus musculus (Mouse), this protein is Dol-P-Man:Man(5)GlcNAc(2)-PP-Dol alpha-1,3-mannosyltransferase.